The primary structure comprises 144 residues: Oxoglutarate dehydrogenase inhibitor (144 aa).

Threonine 14 is subject to Phosphothreonine. The FHA domain maps to threonine 68–lysine 117.

Its subcellular location is the cytoplasm. In terms of biological role, an essential component of the PknG signaling pathway. When unphosphorylated, it inhibits the activity of 2-oxoglutarate dehydrogenase. When phosphorylated it does not inhibit 2-oxoglutarate dehydrogenase. The chain is Oxoglutarate dehydrogenase inhibitor (odhI) from Corynebacterium jeikeium (strain K411).